The primary structure comprises 105 residues: Large ribosomal subunit protein uL24 (105 aa).

The protein belongs to the universal ribosomal protein uL24 family. As to quaternary structure, part of the 50S ribosomal subunit.

Its function is as follows. One of two assembly initiator proteins, it binds directly to the 5'-end of the 23S rRNA, where it nucleates assembly of the 50S subunit. One of the proteins that surrounds the polypeptide exit tunnel on the outside of the subunit. The protein is Large ribosomal subunit protein uL24 of Clostridium novyi (strain NT).